Here is a 447-residue protein sequence, read N- to C-terminus: MPINITMPALSPTMEEGNLAKWLVKEGDKVKSGDVIAEIETDKATMEVEAVDEGTVAKIVVPAGTEGVKVNALIAVLAAEGEDVATAAKGGNGAAGAVPAPKPKETAETAPAAAPAPAAAPAPQAAAPASPAPADGEGKRIFSSPLARRLAKEAGIDLSAIAGSGPHGRVVKKDVETAVSGGAAKPAGAPAAAPAPATLAKGMSEDAVLKLFEPGSYELVPHDGMRKTIAKRLVESKQTIPHFYVSVDCELDALMALRAQLNAAAPEKDGKPVYKLSVNDMVIKALALALRDVPDANVSWTDQNMVKHKHADVGVAVSIPGGLITPIVRQAELKSLSAISNEMKDLGKRAKERKLKPEEYQGGTTAVSNMGMMGVKDFAAVVNPPHATILAVGAGEDRVVVRNKEMVIANVMTVTLSTDHRCVDGALGAELLAAFKRYIENPMGMLV.

A Lipoyl-binding domain is found at 2–78 (PINITMPALS…KVNALIAVLA (77 aa)). Lysine 43 is subject to N6-lipoyllysine. Residues 91 to 140 (GNGAAGAVPAPKPKETAETAPAAAPAPAAAPAPQAAAPASPAPADGEGKR) are disordered. The span at 108 to 134 (ETAPAAAPAPAAAPAPQAAAPASPAPA) shows a compositional bias: low complexity. In terms of domain architecture, Peripheral subunit-binding (PSBD) spans 142-179 (FSSPLARRLAKEAGIDLSAIAGSGPHGRVVKKDVETAV). Histidine 420 is an active-site residue.

This sequence belongs to the 2-oxoacid dehydrogenase family. Forms a 24-polypeptide structural core with octahedral symmetry. Requires (R)-lipoate as cofactor.

The catalysed reaction is N(6)-[(R)-dihydrolipoyl]-L-lysyl-[protein] + acetyl-CoA = N(6)-[(R)-S(8)-acetyldihydrolipoyl]-L-lysyl-[protein] + CoA. In terms of biological role, the pyruvate dehydrogenase complex catalyzes the overall conversion of pyruvate to acetyl-CoA and CO(2). It contains multiple copies of three enzymatic components: pyruvate dehydrogenase (E1), dihydrolipoamide acetyltransferase (E2) and lipoamide dehydrogenase (E3). This Rhizobium meliloti (strain 1021) (Ensifer meliloti) protein is Dihydrolipoyllysine-residue acetyltransferase component of pyruvate dehydrogenase complex (pdhC).